A 405-amino-acid chain; its full sequence is MVSTNAGGIASKQASSMAPNPGKATILALGHAFPQQLVMQDYVVDGFMRNTNCDDPELKEKLTRLCKTTTVKTRYVVMSEEILKSYPELAQEGQPTMKQRLDISNKAVTQMATEASLACVRSWGGALSEITHLVYVSSSEARFPGGDLHLARALGLSPDVRRVMLAFTGCSGGVAGLRVAKGLAESCPGARVLLATSETTIVGFRPPSPDRPYDLVGVALFGDGAGAAVVGADPTPVERPLFELHSALQRFLPDTDKTIDGRLTEEGIKFQLGRELPHIIEANVEAFCQKLMQEHPQAADKLTYGDMFWAVHPGGPAILTKMEGRLGLDGGKLRASRSALRDFGNASSNTIVYVLENMVEETRQRREEAAEEEDCEWGLILAFGPGITFEGILARNLQARARARD.

A compositionally biased stretch (polar residues) spans 1–18; the sequence is MVSTNAGGIASKQASSMA. The disordered stretch occupies residues 1–20; it reads MVSTNAGGIASKQASSMAPN. The Nucleophile role is filled by cysteine 170.

Belongs to the thiolase-like superfamily. Chalcone/stilbene synthases family. As to quaternary structure, interacts with STS1. In terms of tissue distribution, expressed in adult flowers.

It localises to the endoplasmic reticulum. Functionally, plant type III polyketide synthases (PKSs) that catalyzes the condensation of fatty acyl-CoA with malonyl-CoA to generate triketide and tetraketide alpha-pyrones, the main components of pollen exine and potential sporopollenin precursors. May be involved in the synthesis of sporopollenin precursors in tapetal cells to regulate pollen wall formation. Required for exine and Ubisch body formation in anthers. Does not possess chalcone synthase (CHS) activity in vitro with the substrates 4-coumaroyl-CoA and malonyl-CoA. This Oryza sativa subsp. japonica (Rice) protein is Type III polyketide synthase 10.